We begin with the raw amino-acid sequence, 420 residues long: Probable glucuronosyltransferase Os04g0398600 (420 aa).

Residues 1 to 4 (MGSR) are Cytoplasmic-facing. A helical; Signal-anchor for type II membrane protein transmembrane segment spans residues 5–25 (TVGWWLLAAAVVLAAAAADSG). Topologically, residues 26-420 (EAERAAEQHS…AGPVGDLKAW (395 aa)) are lumenal. 2 N-linked (GlcNAc...) asparagine glycosylation sites follow: asparagine 147 and asparagine 408.

The protein belongs to the glycosyltransferase 47 family.

It localises to the golgi apparatus membrane. Functionally, involved in the synthesis of glucuronoxylan hemicellulose in secondary cell walls. In Oryza sativa subsp. japonica (Rice), this protein is Probable glucuronosyltransferase Os04g0398600.